The primary structure comprises 32 residues: Kappa-conotoxin SrXIA (32 aa).

4 disulfides stabilise this stretch: C1/C15, C8/C20, C14/C24, and C19/C28. Residues E9 and E10 each carry the 4-carboxyglutamate modification. Position 32 is a proline amide (P32).

The protein belongs to the conotoxin I2 superfamily. Expressed by the venom duct.

Its subcellular location is the secreted. In terms of biological role, kappa-conotoxins bind and inhibit voltage-gated potassium channels. This toxin inhibits Kv1.2/KCNA2 and Kv1.6/KCNA6. Produces stiffening of body, limbs and tail when injected intracranially into mice. This Conus spurius (Alphabet cone) protein is Kappa-conotoxin SrXIA.